Reading from the N-terminus, the 466-residue chain is UDP-glycosyltransferase 79 (466 aa).

Residue histidine 27 is the Proton acceptor of the active site. Histidine 27 is a UDP-alpha-D-glucose binding site. Aspartate 120 functions as the Charge relay in the catalytic mechanism. UDP-alpha-D-glucose is bound by residues serine 142, threonine 291, phenylalanine 343, cysteine 344, histidine 361, tryptophan 364, asparagine 365, serine 366, glutamate 369, aspartate 385, and glutamine 386. 4 residues coordinate UDP: threonine 291, phenylalanine 343, cysteine 344, and histidine 361. Positions 365, 366, and 369 each coordinate UDP.

Belongs to the UDP-glycosyltransferase family.

Its function is as follows. Involved in the detoxification of the Fusarium mycotoxin deoxynivalenol by the transfer of glucose from UDP-D-glucose to the hydroxyl group at C-3, forming deoxynivalenol-3-O-beta-D-glucoside. This is UDP-glycosyltransferase 79 from Oryza sativa subsp. japonica (Rice).